The primary structure comprises 356 residues: 3-isopropylmalate dehydrogenase (356 aa).

Substrate is bound by residues Arg95, Arg105, Arg133, and Asp223. Positions 223, 247, and 251 each coordinate Mg(2+). 281–293 contributes to the NAD(+) binding site; it reads GSAPDIAGQNKAN.

This sequence belongs to the isocitrate and isopropylmalate dehydrogenases family. LeuB type 1 subfamily. Homodimer. Mg(2+) serves as cofactor. The cofactor is Mn(2+).

The protein localises to the cytoplasm. The catalysed reaction is (2R,3S)-3-isopropylmalate + NAD(+) = 4-methyl-2-oxopentanoate + CO2 + NADH. The protein operates within amino-acid biosynthesis; L-leucine biosynthesis; L-leucine from 3-methyl-2-oxobutanoate: step 3/4. Its function is as follows. Catalyzes the oxidation of 3-carboxy-2-hydroxy-4-methylpentanoate (3-isopropylmalate) to 3-carboxy-4-methyl-2-oxopentanoate. The product decarboxylates to 4-methyl-2 oxopentanoate. The sequence is that of 3-isopropylmalate dehydrogenase from Neisseria gonorrhoeae (strain ATCC 700825 / FA 1090).